The primary structure comprises 483 residues: ATP synthase subunit beta, chloroplastic (483 aa).

163–170 contributes to the ATP binding site; it reads GGAGVGKT.

This sequence belongs to the ATPase alpha/beta chains family. F-type ATPases have 2 components, CF(1) - the catalytic core - and CF(0) - the membrane proton channel. CF(1) has five subunits: alpha(3), beta(3), gamma(1), delta(1), epsilon(1). CF(0) has four main subunits: a(1), b(1), b'(1) and c(9-12).

The protein resides in the plastid. The protein localises to the chloroplast thylakoid membrane. The enzyme catalyses ATP + H2O + 4 H(+)(in) = ADP + phosphate + 5 H(+)(out). Produces ATP from ADP in the presence of a proton gradient across the membrane. The catalytic sites are hosted primarily by the beta subunits. In Ostreococcus tauri, this protein is ATP synthase subunit beta, chloroplastic.